The sequence spans 540 residues: Ipecac alkaloid beta-glucosidase 9 (540 aa).

A beta-D-glucoside is bound by residues Gln36, His140, 185-186 (NE), Tyr350, Glu421, Trp470, and Phe486. The active-site Proton donor is Glu186. Glu421 (nucleophile) is an active-site residue.

This sequence belongs to the glycosyl hydrolase 1 family.

It is found in the cytoplasm. The protein resides in the cytosol. It catalyses the reaction deacetylipecoside + H2O = deacetylipecoside aglycone + D-glucose. The catalysed reaction is deacetylisoipecoside + H2O = deacetylisoipecoside aglycone + D-glucose. The protein operates within alkaloid biosynthesis. Beta-glucosidase catalyzing deglucosylation on N-deacetylisoipecoside and N-deacetylipecoside. The chain is Ipecac alkaloid beta-glucosidase 9 from Carapichea ipecacuanha (Ipecac).